A 487-amino-acid chain; its full sequence is N-succinylglutamate 5-semialdehyde dehydrogenase (487 aa).

An NAD(+)-binding site is contributed by 221-226 (GSSDTG). Catalysis depends on residues glutamate 244 and cysteine 278.

Belongs to the aldehyde dehydrogenase family. AstD subfamily.

The catalysed reaction is N-succinyl-L-glutamate 5-semialdehyde + NAD(+) + H2O = N-succinyl-L-glutamate + NADH + 2 H(+). It functions in the pathway amino-acid degradation; L-arginine degradation via AST pathway; L-glutamate and succinate from L-arginine: step 4/5. Functionally, catalyzes the NAD-dependent reduction of succinylglutamate semialdehyde into succinylglutamate. In Burkholderia multivorans (strain ATCC 17616 / 249), this protein is N-succinylglutamate 5-semialdehyde dehydrogenase.